We begin with the raw amino-acid sequence, 68 residues long: Glucagon-1 (68 aa).

It belongs to the glucagon family.

It localises to the secreted. Its function is as follows. Promotes hydrolysis of glycogen and lipids, and raises the blood sugar level. This chain is Glucagon-1 (gcg), found in Oncorhynchus kisutch (Coho salmon).